Reading from the N-terminus, the 314-residue chain is Probable manganese-dependent inorganic pyrophosphatase (314 aa).

Mn(2+)-binding residues include H7, D11, D13, D72, H94, and D146.

The protein belongs to the PPase class C family. Mn(2+) serves as cofactor.

It localises to the cytoplasm. The enzyme catalyses diphosphate + H2O = 2 phosphate + H(+). The chain is Probable manganese-dependent inorganic pyrophosphatase (ppaC) from Deinococcus radiodurans (strain ATCC 13939 / DSM 20539 / JCM 16871 / CCUG 27074 / LMG 4051 / NBRC 15346 / NCIMB 9279 / VKM B-1422 / R1).